A 519-amino-acid polypeptide reads, in one-letter code: Protein nucleotidyltransferase YdiU (519 aa).

Gly100, Gly102, Arg103, Lys123, Asp135, Gly136, Arg193, and Arg200 together coordinate ATP. The active-site Proton acceptor is the Asp270. Positions 271 and 280 each coordinate Mg(2+). Asp280 is a binding site for ATP.

Belongs to the SELO family. It depends on Mg(2+) as a cofactor. Mn(2+) is required as a cofactor.

The enzyme catalyses L-seryl-[protein] + ATP = 3-O-(5'-adenylyl)-L-seryl-[protein] + diphosphate. The catalysed reaction is L-threonyl-[protein] + ATP = 3-O-(5'-adenylyl)-L-threonyl-[protein] + diphosphate. It carries out the reaction L-tyrosyl-[protein] + ATP = O-(5'-adenylyl)-L-tyrosyl-[protein] + diphosphate. It catalyses the reaction L-histidyl-[protein] + UTP = N(tele)-(5'-uridylyl)-L-histidyl-[protein] + diphosphate. The enzyme catalyses L-seryl-[protein] + UTP = O-(5'-uridylyl)-L-seryl-[protein] + diphosphate. The catalysed reaction is L-tyrosyl-[protein] + UTP = O-(5'-uridylyl)-L-tyrosyl-[protein] + diphosphate. Its function is as follows. Nucleotidyltransferase involved in the post-translational modification of proteins. It can catalyze the addition of adenosine monophosphate (AMP) or uridine monophosphate (UMP) to a protein, resulting in modifications known as AMPylation and UMPylation. In Xylella fastidiosa (strain 9a5c), this protein is Protein nucleotidyltransferase YdiU.